A 451-amino-acid polypeptide reads, in one-letter code: uncharacterized protein (451 aa).

11 consecutive transmembrane segments (helical) span residues 13–33 (IGFVMAAAGSAIGLGAIWKFP), 41–61 (GGAFFLIFVLFTILLGYPLLV), 97–117 (ACFLVLSFYSVIGGWILLYIV), 142–162 (NPVQTLAAQLVFMALTVLVVA), 174–194 (AVMMPILFLLFILLVLRSLTL), 217–237 (ILFALGQAFFTLTLGVSVMVT), 255–275 (IVLMNIIVTLLAGLAIFPAVF), 299–319 (LPFGTLFFIGFLVAFLFAALT), 345–365 (WTSGLLIFLVGIPCCLSYGVL), 381–401 (FTVSNVLMPSGALLISLFIPL), and 429–449 (LLRFIVPLAIIIVFLNLIGIL).

Belongs to the sodium:neurotransmitter symporter (SNF) (TC 2.A.22) family.

The protein resides in the cell membrane. In terms of biological role, putative sodium-dependent transporter. This is an uncharacterized protein from Bacillus subtilis (strain 168).